A 762-amino-acid chain; its full sequence is Alpha-xylosidase XylQ (762 aa).

D414 acts as the Nucleophile in catalysis. E417 is an active-site residue.

This sequence belongs to the glycosyl hydrolase 31 family.

The protein localises to the cell membrane. It carries out the reaction Hydrolysis of terminal, non-reducing alpha-D-xylose residues with release of alpha-D-xylose.. Its function is as follows. Involved in the metabolism of isoprimeverose. Hydrolyzes isoprimeverose into equimolar amounts of glucose and xylose. In vitro, can also use p-nitrophenyl-alpha-D-xylopyranoside (alpha-p-NPX). The sequence is that of Alpha-xylosidase XylQ from Lactiplantibacillus pentosus (Lactobacillus pentosus).